The sequence spans 406 residues: Formate-dependent phosphoribosylglycinamide formyltransferase (406 aa).

Residues 28–29 (EL) and Glu88 contribute to the N(1)-(5-phospho-beta-D-ribosyl)glycinamide site. ATP-binding positions include Arg121, Lys162, 167-172 (SSGKGQ), 202-205 (EGFI), and Glu210. Positions 126–320 (RLAAEELGCA…EFELHAKAIL (195 aa)) constitute an ATP-grasp domain. Mg(2+) contacts are provided by Glu279 and Glu291. Residues Asp298, Lys367, and 374–375 (RR) each bind N(1)-(5-phospho-beta-D-ribosyl)glycinamide.

This sequence belongs to the PurK/PurT family. Homodimer.

It catalyses the reaction N(1)-(5-phospho-beta-D-ribosyl)glycinamide + formate + ATP = N(2)-formyl-N(1)-(5-phospho-beta-D-ribosyl)glycinamide + ADP + phosphate + H(+). The protein operates within purine metabolism; IMP biosynthesis via de novo pathway; N(2)-formyl-N(1)-(5-phospho-D-ribosyl)glycinamide from N(1)-(5-phospho-D-ribosyl)glycinamide (formate route): step 1/1. Functionally, involved in the de novo purine biosynthesis. Catalyzes the transfer of formate to 5-phospho-ribosyl-glycinamide (GAR), producing 5-phospho-ribosyl-N-formylglycinamide (FGAR). Formate is provided by PurU via hydrolysis of 10-formyl-tetrahydrofolate. This chain is Formate-dependent phosphoribosylglycinamide formyltransferase, found in Janthinobacterium sp. (strain Marseille) (Minibacterium massiliensis).